The following is a 123-amino-acid chain: Putative iron-sulfur cluster insertion protein ErpA (123 aa).

Residues C51, C115, and C117 each coordinate iron-sulfur cluster.

The protein belongs to the HesB/IscA family. Homodimer. The cofactor is iron-sulfur cluster.

In terms of biological role, required for insertion of 4Fe-4S clusters. The polypeptide is Putative iron-sulfur cluster insertion protein ErpA (Burkholderia lata (strain ATCC 17760 / DSM 23089 / LMG 22485 / NCIMB 9086 / R18194 / 383)).